Here is a 243-residue protein sequence, read N- to C-terminus: Uridylate kinase (243 aa).

12–15 (KLSG) contributes to the ATP binding site. The involved in allosteric activation by GTP stretch occupies residues 20-25 (GAKGFG). 2 residues coordinate ATP: Gly-55 and Arg-59. Residues Asp-74 and 135 to 142 (TGNPYFTT) contribute to the UMP site. Positions 163, 169, and 172 each coordinate ATP.

The protein belongs to the UMP kinase family. In terms of assembly, homohexamer.

Its subcellular location is the cytoplasm. The catalysed reaction is UMP + ATP = UDP + ADP. The protein operates within pyrimidine metabolism; CTP biosynthesis via de novo pathway; UDP from UMP (UMPK route): step 1/1. Allosterically activated by GTP. Inhibited by UTP. In terms of biological role, catalyzes the reversible phosphorylation of UMP to UDP. This Symbiobacterium thermophilum (strain DSM 24528 / JCM 14929 / IAM 14863 / T) protein is Uridylate kinase.